Reading from the N-terminus, the 535-residue chain is Growth-regulating factor 2 (535 aa).

A QLQ domain is found at 164–199; it reads PFTLTQWAELEQQALIYKYITANVPVPSSLLISIKK. In terms of domain architecture, WRC spans 227 to 271; the sequence is DPEPGRCRRTDGKKWRCSRDAVPDQKYCERHINRGRHRSRKPVEV. 2 short sequence motifs (bipartite nuclear localization signal) span residues 232–242 and 260–267; these read RCRRTDGKKWR and RGRHRSRK. Disordered regions lie at residues 260–308, 417–437, and 514–535; these read RGRH…ASSN, PIAS…EKTT, and SSVS…HYTT. Positions 272 to 291 are enriched in polar residues; sequence QSGQNQTAAAASKAVTTPQQ. The segment covering 299-308 has biased composition (low complexity); sequence NRSNARASSN. Residues 426–437 show a composition bias toward polar residues; it reads THNNNNAQEKTT.

This sequence belongs to the GRF family. In terms of assembly, interacts with GIF1. In terms of tissue distribution, strongly expressed in actively growing and developing tissues, such as roots, upper stems, and shoot tips containing the shoot apical meristem (SAM) and flower buds. Detected in young leaf primordium. Also expressed in mature flowers, but weakly expressed in mature stems and leaves.

Its subcellular location is the nucleus. In terms of biological role, transcription activator that plays a role in the regulation of cell expansion in leaf and cotyledons tissues. Component of a network formed by miR396, the GRFs and their interacting factors (GIFs) acting in the regulation of meristem function, at least partially through the control of cell proliferation. The sequence is that of Growth-regulating factor 2 (GRF2) from Arabidopsis thaliana (Mouse-ear cress).